The chain runs to 336 residues: dTDP-glucose 4,6-dehydratase (336 aa).

NAD(+) contacts are provided by residues 7 to 13 (GGAGFIG), 37 to 40 (DKLT), and 63 to 64 (DI). Thr87 is a binding site for substrate. Residue Thr102 participates in NAD(+) binding. Position 127–129 (127–129 (TDE)) interacts with substrate. Asp128 functions as the Proton donor in the catalytic mechanism. Residues Glu129 and Tyr151 each act as proton acceptor in the active site. 151-155 (YAAAK) contributes to the NAD(+) binding site. Asn180 lines the substrate pocket. Asn181 contacts NAD(+). Residues 190–191 (KL), 206–208 (PVY), Arg215, Asn250, and 274–277 (RPGH) contribute to the substrate site.

This sequence belongs to the NAD(P)-dependent epimerase/dehydratase family. dTDP-glucose dehydratase subfamily. As to quaternary structure, homodimer. NAD(+) is required as a cofactor.

It carries out the reaction dTDP-alpha-D-glucose = dTDP-4-dehydro-6-deoxy-alpha-D-glucose + H2O. The protein operates within antibiotic biosynthesis; novobiocin biosynthesis. Its function is as follows. dTDP-glucose 4,6-dehydratase involved in the generation of the deoxysugar in the novobiocin biosynthesis pathway, an aminocoumarin family antibiotic that targets bacterial DNA gyrases. The sequence is that of dTDP-glucose 4,6-dehydratase (novT) from Streptomyces niveus (Streptomyces spheroides).